A 270-amino-acid polypeptide reads, in one-letter code: Hemin import ATP-binding protein HmuV (270 aa).

One can recognise an ABC transporter domain in the interval 2–238 (LTVENIEVTL…VTLSQAYGCT (237 aa)). 34-41 (GHNGSGKT) is a binding site for ATP.

Belongs to the ABC transporter superfamily. Heme (hemin) importer (TC 3.A.1.14.5) family. The complex is composed of two ATP-binding proteins (HmuV), two transmembrane proteins (HmuU) and a solute-binding protein (HmuT).

It is found in the cell inner membrane. Functionally, part of the ABC transporter complex HmuTUV involved in hemin import. Responsible for energy coupling to the transport system. This Jannaschia sp. (strain CCS1) protein is Hemin import ATP-binding protein HmuV.